The chain runs to 402 residues: NADH-quinone oxidoreductase subunit D (402 aa).

It belongs to the complex I 49 kDa subunit family. As to quaternary structure, NDH-1 is composed of 14 different subunits. Subunits NuoB, C, D, E, F, and G constitute the peripheral sector of the complex.

The protein localises to the cell inner membrane. The catalysed reaction is a quinone + NADH + 5 H(+)(in) = a quinol + NAD(+) + 4 H(+)(out). Its function is as follows. NDH-1 shuttles electrons from NADH, via FMN and iron-sulfur (Fe-S) centers, to quinones in the respiratory chain. The immediate electron acceptor for the enzyme in this species is believed to be ubiquinone. Couples the redox reaction to proton translocation (for every two electrons transferred, four hydrogen ions are translocated across the cytoplasmic membrane), and thus conserves the redox energy in a proton gradient. In Rhodopseudomonas palustris (strain ATCC BAA-98 / CGA009), this protein is NADH-quinone oxidoreductase subunit D.